The primary structure comprises 386 residues: Ovalbumin (386 aa).

G2 carries the post-translational modification N-acetylglycine. S69 is modified (phosphoserine). Residues C74 and C121 are joined by a disulfide bond. N293 carries N-linked (GlcNAc...) asparagine glycosylation. At S345 the chain carries Phosphoserine.

Belongs to the serpin family. Ov-serpin subfamily. Post-translationally, the N-terminus is blocked.

The protein localises to the secreted. Its function is as follows. Storage protein of egg white. Lacks protease inhibitory activity. The protein is Ovalbumin (SERPINB14) of Dromaius novaehollandiae (Emu).